Here is a 640-residue protein sequence, read N- to C-terminus: Sodium-dependent nutrient amino acid transporter 1 (640 aa).

The span at methionine 1–asparagine 13 shows a compositional bias: low complexity. The segment at methionine 1 to lysine 25 is disordered. Residues methionine 1–asparagine 30 are Cytoplasmic-facing. Positions glutamate 16–lysine 25 are enriched in basic and acidic residues. 3 consecutive transmembrane segments (helical) span residues tryptophan 31 to valine 51, glycine 64 to leucine 84, and threonine 117 to valine 137. Asparagine 174, asparagine 181, and asparagine 197 each carry an N-linked (GlcNAc...) asparagine glycan. 9 consecutive transmembrane segments (helical) span residues proline 228 to methionine 248, alanine 257 to valine 277, alanine 306 to serine 326, isoleucine 340 to leucine 360, leucine 400 to leucine 420, cysteine 447 to valine 467, threonine 473 to leucine 493, cysteine 515 to isoleucine 535, and valine 551 to tyrosine 571.

This sequence belongs to the sodium:neurotransmitter symporter (SNF) (TC 2.A.22) family.

It is found in the membrane. Functionally, unusual broad substrate spectrum amino acid:sodium cotransporter that promotes absorption of the D isomers of essential amino acids. Neutral amino acids are the preferred substrates, especially methionine and phenylalanine. This chain is Sodium-dependent nutrient amino acid transporter 1, found in Drosophila ananassae (Fruit fly).